A 402-amino-acid chain; its full sequence is Multidrug resistance protein MdtH (402 aa).

The next 11 membrane-spanning stretches (helical) occupy residues 13 to 33 (YFLL…FPLI), 34 to 54 (SIRF…ALGL), 99 to 116 (PWVL…GTLF), 139 to 159 (LLMM…SWLL), 165 to 185 (LVCG…AWLL), 214 to 234 (VLTL…LPVM), 243 to 263 (AAVK…LYPL), 277 to 297 (LMAG…ASNL), 300 to 320 (LFTL…ARET), 340 to 360 (LGLA…FDAG), and 368 to 388 (LPWA…WWQF).

The protein belongs to the major facilitator superfamily. DHA1 family. MdtH (TC 2.A.1.2.21) subfamily.

The protein localises to the cell inner membrane. The chain is Multidrug resistance protein MdtH from Cronobacter sakazakii (strain ATCC BAA-894) (Enterobacter sakazakii).